Consider the following 589-residue polypeptide: Probable galacturonosyltransferase 6 (589 aa).

Residues Met1–Arg6 lie on the Cytoplasmic side of the membrane. Residues Trp7–Val27 traverse the membrane as a helical; Signal-anchor for type II membrane protein segment. Topologically, residues Ser28–Ala589 are lumenal. Residues Asn83 and Asn126 are each glycosylated (N-linked (GlcNAc...) asparagine). The interval Lys127–Val151 is disordered. Residues Lys136–Val151 show a composition bias toward basic and acidic residues. 2 N-linked (GlcNAc...) asparagine glycosylation sites follow: Asn317 and Asn454.

This sequence belongs to the glycosyltransferase 8 family. In terms of tissue distribution, expressed in roots, inflorescences, siliques, leaves and stems.

It is found in the golgi apparatus membrane. Its pathway is glycan metabolism; pectin biosynthesis. Its function is as follows. Probably involved in pectin biosynthesis in cell walls. The protein is Probable galacturonosyltransferase 6 (GAUT6) of Arabidopsis thaliana (Mouse-ear cress).